We begin with the raw amino-acid sequence, 321 residues long: Anthranilate phosphoribosyltransferase (321 aa).

Residues G72, 75–76 (GD), T80, 82–85 (NVST), 99–107 (KHGNVSITS), and S111 each bind 5-phospho-alpha-D-ribose 1-diphosphate. An anthranilate-binding site is contributed by G72. Mg(2+) is bound at residue S84. Residue N102 participates in anthranilate binding. R157 provides a ligand contact to anthranilate. Residues D216 and E217 each contribute to the Mg(2+) site.

It belongs to the anthranilate phosphoribosyltransferase family. Homodimer. It depends on Mg(2+) as a cofactor.

It catalyses the reaction N-(5-phospho-beta-D-ribosyl)anthranilate + diphosphate = 5-phospho-alpha-D-ribose 1-diphosphate + anthranilate. It participates in amino-acid biosynthesis; L-tryptophan biosynthesis; L-tryptophan from chorismate: step 2/5. Catalyzes the transfer of the phosphoribosyl group of 5-phosphorylribose-1-pyrophosphate (PRPP) to anthranilate to yield N-(5'-phosphoribosyl)-anthranilate (PRA). The polypeptide is Anthranilate phosphoribosyltransferase (Methanococcus maripaludis (strain C5 / ATCC BAA-1333)).